The primary structure comprises 401 residues: Dual-specificity RNA methyltransferase RlmN (401 aa).

Catalysis depends on glutamate 114, which acts as the Proton acceptor. A Radical SAM core domain is found at aspartate 120–aspartate 365. A disulfide bond links cysteine 127 and cysteine 370. Residues cysteine 134, cysteine 138, and cysteine 141 each contribute to the [4Fe-4S] cluster site. S-adenosyl-L-methionine-binding positions include glycine 187–glutamate 188, serine 219, serine 241–histidine 243, and asparagine 327. Catalysis depends on cysteine 370, which acts as the S-methylcysteine intermediate.

Belongs to the radical SAM superfamily. RlmN family. Requires [4Fe-4S] cluster as cofactor.

Its subcellular location is the cytoplasm. It catalyses the reaction adenosine(2503) in 23S rRNA + 2 reduced [2Fe-2S]-[ferredoxin] + 2 S-adenosyl-L-methionine = 2-methyladenosine(2503) in 23S rRNA + 5'-deoxyadenosine + L-methionine + 2 oxidized [2Fe-2S]-[ferredoxin] + S-adenosyl-L-homocysteine. The catalysed reaction is adenosine(37) in tRNA + 2 reduced [2Fe-2S]-[ferredoxin] + 2 S-adenosyl-L-methionine = 2-methyladenosine(37) in tRNA + 5'-deoxyadenosine + L-methionine + 2 oxidized [2Fe-2S]-[ferredoxin] + S-adenosyl-L-homocysteine. Specifically methylates position 2 of adenine 2503 in 23S rRNA and position 2 of adenine 37 in tRNAs. m2A2503 modification seems to play a crucial role in the proofreading step occurring at the peptidyl transferase center and thus would serve to optimize ribosomal fidelity. This is Dual-specificity RNA methyltransferase RlmN from Xanthomonas oryzae pv. oryzae (strain MAFF 311018).